Here is a 372-residue protein sequence, read N- to C-terminus: uncharacterized protein (372 aa).

The disordered stretch occupies residues 49-72 (FSHKGGGKGGGSGAGSNDGGCSGE). A compositionally biased stretch (gly residues) spans 55–70 (GKGGGSGAGSNDGGCS).

This is an uncharacterized protein from Halorubrum lacusprofundi (strain ATCC 49239 / DSM 5036 / JCM 8891 / ACAM 34).